Consider the following 524-residue polypeptide: Chromosomal replication initiator protein DnaA (524 aa).

Positions 1-85 (MSQNSSSLLE…TRVLSLRMGR (85 aa)) are domain I, interacts with DnaA modulators. Residues 85 to 182 (RSFSLAVSVE…TPAHNPNREV (98 aa)) form a domain II region. The tract at residues 95–183 (PEQEIPETPA…PAHNPNREVS (89 aa)) is disordered. The segment covering 148–158 (APEPHPAPIAD) has biased composition (pro residues). The tract at residues 183–399 (SLNPKYTFES…GALIRVSAYS (217 aa)) is domain III, AAA+ region. ATP-binding residues include glycine 227, glycine 229, lysine 230, and threonine 231. Residues 400 to 524 (SLINQPIDKE…TQLIKSRGRN (125 aa)) are domain IV, binds dsDNA.

This sequence belongs to the DnaA family. Oligomerizes as a right-handed, spiral filament on DNA at oriC.

Its subcellular location is the cytoplasm. Plays an essential role in the initiation and regulation of chromosomal replication. ATP-DnaA binds to the origin of replication (oriC) to initiate formation of the DNA replication initiation complex once per cell cycle. Binds the DnaA box (a 9 base pair repeat at the origin) and separates the double-stranded (ds)DNA. Forms a right-handed helical filament on oriC DNA; dsDNA binds to the exterior of the filament while single-stranded (ss)DNA is stabiized in the filament's interior. The ATP-DnaA-oriC complex binds and stabilizes one strand of the AT-rich DNA unwinding element (DUE), permitting loading of DNA polymerase. After initiation quickly degrades to an ADP-DnaA complex that is not apt for DNA replication. Binds acidic phospholipids. This is Chromosomal replication initiator protein DnaA from Corynebacterium glutamicum (strain ATCC 13032 / DSM 20300 / JCM 1318 / BCRC 11384 / CCUG 27702 / LMG 3730 / NBRC 12168 / NCIMB 10025 / NRRL B-2784 / 534).